Reading from the N-terminus, the 277-residue chain is Large ribosomal subunit protein mL46 (277 aa).

An N6-succinyllysine modification is found at lysine 217. Lysine 228 carries the N6-acetyllysine modification. Lysine 246 bears the N6-succinyllysine mark.

The protein belongs to the mitochondrion-specific ribosomal protein mL46 family. Component of the mitochondrial ribosome large subunit (39S) which comprises a 16S rRNA and about 50 distinct proteins.

It is found in the mitochondrion. In Rattus norvegicus (Rat), this protein is Large ribosomal subunit protein mL46 (Mrpl46).